We begin with the raw amino-acid sequence, 197 residues long: Dephospho-CoA kinase (197 aa).

The 196-residue stretch at 2 to 197 (RIGLTGGIAS…YDALAKTAHE (196 aa)) folds into the DPCK domain. Residue 10–15 (ASGKSL) participates in ATP binding.

This sequence belongs to the CoaE family.

It is found in the cytoplasm. It carries out the reaction 3'-dephospho-CoA + ATP = ADP + CoA + H(+). The protein operates within cofactor biosynthesis; coenzyme A biosynthesis; CoA from (R)-pantothenate: step 5/5. Functionally, catalyzes the phosphorylation of the 3'-hydroxyl group of dephosphocoenzyme A to form coenzyme A. The protein is Dephospho-CoA kinase of Shouchella clausii (strain KSM-K16) (Alkalihalobacillus clausii).